The following is an 84-amino-acid chain: Small ribosomal subunit protein uS17 (84 aa).

It belongs to the universal ribosomal protein uS17 family. As to quaternary structure, part of the 30S ribosomal subunit.

One of the primary rRNA binding proteins, it binds specifically to the 5'-end of 16S ribosomal RNA. This is Small ribosomal subunit protein uS17 from Aliivibrio salmonicida (strain LFI1238) (Vibrio salmonicida (strain LFI1238)).